A 323-amino-acid polypeptide reads, in one-letter code: Biotin synthase (323 aa).

A Radical SAM core domain is found at threonine 46–arginine 264. Positions 61, 65, and 68 each coordinate [4Fe-4S] cluster. [2Fe-2S] cluster-binding residues include cysteine 105, cysteine 136, cysteine 196, and arginine 268.

This sequence belongs to the radical SAM superfamily. Biotin synthase family. Homodimer. [4Fe-4S] cluster is required as a cofactor. [2Fe-2S] cluster serves as cofactor.

The catalysed reaction is (4R,5S)-dethiobiotin + (sulfur carrier)-SH + 2 reduced [2Fe-2S]-[ferredoxin] + 2 S-adenosyl-L-methionine = (sulfur carrier)-H + biotin + 2 5'-deoxyadenosine + 2 L-methionine + 2 oxidized [2Fe-2S]-[ferredoxin]. Its pathway is cofactor biosynthesis; biotin biosynthesis; biotin from 7,8-diaminononanoate: step 2/2. Functionally, catalyzes the conversion of dethiobiotin (DTB) to biotin by the insertion of a sulfur atom into dethiobiotin via a radical-based mechanism. In Bordetella avium (strain 197N), this protein is Biotin synthase.